Consider the following 134-residue polypeptide: NADH-quinone oxidoreductase subunit A (134 aa).

3 helical membrane passes run 12-32 (FAIY…LAAL), 64-84 (FYLV…LFAW), and 93-113 (WVGF…LVYL).

This sequence belongs to the complex I subunit 3 family. As to quaternary structure, NDH-1 is composed of 13 different subunits. Subunits NuoA, H, J, K, L, M, N constitute the membrane sector of the complex.

Its subcellular location is the cell inner membrane. The catalysed reaction is a quinone + NADH + 5 H(+)(in) = a quinol + NAD(+) + 4 H(+)(out). Functionally, NDH-1 shuttles electrons from NADH, via FMN and iron-sulfur (Fe-S) centers, to quinones in the respiratory chain. The immediate electron acceptor for the enzyme in this species is believed to be ubiquinone. Couples the redox reaction to proton translocation (for every two electrons transferred, four hydrogen ions are translocated across the cytoplasmic membrane), and thus conserves the redox energy in a proton gradient. This is NADH-quinone oxidoreductase subunit A from Shewanella oneidensis (strain ATCC 700550 / JCM 31522 / CIP 106686 / LMG 19005 / NCIMB 14063 / MR-1).